Consider the following 296-residue polypeptide: MQDRFIKSITQLPTPLADALIPLLHQNFAGHIDAQQLAELVQSSKMTEAEVLLALLPIAAALAKPPISEFYVGAIAKGKSGDIYMGANLELLGEALFHSVHAEQSAISHAWLSGESQIVDMIVNASPCGHCRQFMNELVEGGQIKIHLPSQDSHLLSYYLPYAFGPKDLNVQSPLLVKQETEFALDSSDPMVIEALDHAGLSYAPYTQSYAAVVLETADGATYCGRYAENAAFNPSMLPMQMALSNLTRHNRDFGEIRRAVLVESSQGKISLVGATMDALHAVAAIELEHIVVDPV.

CMP/dCMP-type deaminase domains are found at residues 47–167 (TEAE…FGPK) and 186–296 (DSSD…VDPV). 88-90 (NLE) provides a ligand contact to substrate. H101 is a binding site for Zn(2+). Catalysis depends on E103, which acts as the Proton donor. Zn(2+) is bound by residues C128 and C131.

The protein belongs to the cytidine and deoxycytidylate deaminase family. As to quaternary structure, homodimer. The cofactor is Zn(2+).

It carries out the reaction cytidine + H2O + H(+) = uridine + NH4(+). The enzyme catalyses 2'-deoxycytidine + H2O + H(+) = 2'-deoxyuridine + NH4(+). This enzyme scavenges exogenous and endogenous cytidine and 2'-deoxycytidine for UMP synthesis. The polypeptide is Cytidine deaminase (Shewanella sp. (strain ANA-3)).